A 64-amino-acid polypeptide reads, in one-letter code: Putative calcium channel toxin Tx758 (64 aa).

An N-terminal signal peptide occupies residues 1–18; that stretch reads MSTFVIVFLLLTAVLCHA. The propeptide occupies 19 to 27; that stretch reads EPALDETAR. 3 disulfide bridges follow: C29/C43, C36/C49, and C42/C58.

Belongs to the scorpion calcin-like family. Expressed by the venom gland.

The protein localises to the secreted. Its function is as follows. May increase intracellular calcium release through the activation of nuclear inositol 1,4,5-trisphosphate receptors (ITPR) of cardiomyocytes, thereby causing an increase in the contraction frequency of these cells. This is Putative calcium channel toxin Tx758 from Buthus israelis (Israeli scorpion).